Reading from the N-terminus, the 918-residue chain is Interleukin-6 receptor subunit beta (918 aa).

The signal sequence occupies residues 1 to 22; it reads MSALRIWLMQALLIFLTTESIG. The Extracellular portion of the chain corresponds to 23–618; the sequence is QLVEPCGYIY…TLKFAQGEIE (596 aa). The 95-residue stretch at 26–120 folds into the Ig-like C2-type domain; sequence EPCGYIYPEF…IEQNVYGITI (95 aa). Intrachain disulfides connect Cys-28–Cys-54 and Cys-48–Cys-103. N-linked (GlcNAc...) asparagine glycans are attached at residues Asn-43, Asn-61, Asn-83, and Asn-131. Fibronectin type-III domains follow at residues 125–215, 223–323, 328–418, 422–516, and 518–612; these read PPDI…NFDP, PPHN…TYED, APSF…IPGS, ASHP…LKQA, and PSKG…TLKF. Cys-134 and Cys-144 are oxidised to a cystine. Asn-157 is a glycosylation site (N-linked (GlcNAc...) asparagine). Cys-172 and Cys-181 are disulfide-bonded. 2 N-linked (GlcNAc...) asparagine glycosylation sites follow: Asn-205 and Asn-226. The WSXWS motif motif lies at 309 to 313; it reads WSDWS. 2 N-linked (GlcNAc...) asparagine glycosylation sites follow: Asn-382 and Asn-389. An intrachain disulfide couples Cys-457 to Cys-465. N-linked (GlcNAc...) asparagine glycans are attached at residues Asn-477 and Asn-552. The helical transmembrane segment at 619 to 640 threads the bilayer; it reads AIVVPVCLAFLLTTLLGVLFCF. Residues 641 to 918 lie on the Cytoplasmic side of the membrane; the sequence is NKRDLIKKHI…TVRQGGYMPQ (278 aa). A Box 1 motif motif is present at residues 650-658; it reads IWPNVPDPS. 4 disordered regions span residues 659-679, 720-754, 773-795, and 817-842; these read KSHIAQWSPHTPPRHNFNSKD, TEGHSSGIGGSSCMSSSRPSISSSEENESAQSTAS, VQVFSRSESTQPLLDSEERPEDL, and SCSQPGASPDVSHFGRSSQVPSGSEE. Residues Ser-660 and Ser-666 each carry the phosphoserine modification. A compositionally biased stretch (low complexity) spans 730–751; it reads SSCMSSSRPSISSSEENESAQS. Positions 773–785 are enriched in polar residues; sequence VQVFSRSESTQPL. Phosphoserine is present on residues Ser-781, Ser-788, Ser-828, and Ser-838.

This sequence belongs to the type I cytokine receptor family. Type 2 subfamily. Component of a hexamer of two molecules each of IL6, IL6R and IL6ST; associates with the complex IL6:IL6R but does not interact with IL6. Forms heterodimers composed of LIFR and IL6ST (type I OSM receptor) which are activated by LIF and OSM. Also forms heterodimers composed of OSMR and IL6ST (type II receptor) which are activated by OSM but not by LIF. Interacts with HCK. Interacts with INPP5D/SHIP1. Interacts with SRC and YES. Interacts with ARMH4; this interaction prevents IL6ST protein homodimerization and bridges ARMH4 with IL6R and STAT3 and therefore inhibits phosphorylation of STAT3 at 'Tyr-705'. Post-translationally, phosphorylation of Ser-781 down-regulates cell surface expression. Heavily N-glycosylated. Glycosylation is required for protein stability and localization in plasma membrane but not for ligand binding. As to expression, found in hepatocytes, astrocytes, fibroblasts and endothelial cells.

The protein resides in the cell membrane. Signal-transducing molecule. The receptor systems for IL6, LIF, OSM, CNTF, IL11, CTF1 and BSF3 can utilize IL6ST for initiating signal transmission. Binding of IL6 to IL6R induces IL6ST homodimerization and formation of a high-affinity receptor complex, which activates the intracellular JAK-MAPK and JAK-STAT3 signaling pathways. That causes phosphorylation of IL6ST tyrosine residues which in turn activates STAT3. In parallel, the IL6 signaling pathway induces the expression of two cytokine receptor signaling inhibitors, SOCS1 and SOCS3, which inhibit JAK and terminate the activity of the IL6 signaling pathway as a negative feedback loop. Also activates the yes-associated protein 1 (YAP) and NOTCH pathways to control inflammation-induced epithelial regeneration, independently of STAT3. Mediates signals which regulate immune response, hematopoiesis, pain control and bone metabolism. Has a role in embryonic development. Essential for survival of motor and sensory neurons and for differentiation of astrocytes. Required for expression of TRPA1 in nociceptive neurons. Required for the maintenance of PTH1R expression in the osteoblast lineage and for the stimulation of PTH-induced osteoblast differentiation. Required for normal trabecular bone mass and cortical bone composition. The protein is Interleukin-6 receptor subunit beta of Rattus norvegicus (Rat).